We begin with the raw amino-acid sequence, 555 residues long: CTP synthase (555 aa).

Residues 1-267 (MTKFVFVTGG…AQQVLKFMHL (267 aa)) are amidoligase domain. Ser-13 is a binding site for CTP. A UTP-binding site is contributed by Ser-13. Residues 14–19 (SIGKGI) and Asp-71 each bind ATP. 2 residues coordinate Mg(2+): Asp-71 and Glu-141. CTP-binding positions include 148–150 (DIE), 188–193 (KTKPTQ), and Lys-224. UTP-binding positions include 188 to 193 (KTKPTQ) and Lys-224. Ala-242 is a binding site for ATP. The Glutamine amidotransferase type-1 domain maps to 299–535 (YVQLSDAYLS…VGACLADNGN (237 aa)). Gly-354 contacts L-glutamine. Catalysis depends on Cys-381, which acts as the Nucleophile; for glutamine hydrolysis. L-glutamine contacts are provided by residues 382–385 (LGMQ), Glu-405, and Arg-463. Residues His-508 and Glu-510 contribute to the active site. Residues 536–555 (NANHHDSTPAEPLVSEPLSS) are disordered.

This sequence belongs to the CTP synthase family. Homotetramer.

It catalyses the reaction UTP + L-glutamine + ATP + H2O = CTP + L-glutamate + ADP + phosphate + 2 H(+). It carries out the reaction L-glutamine + H2O = L-glutamate + NH4(+). The catalysed reaction is UTP + NH4(+) + ATP = CTP + ADP + phosphate + 2 H(+). Its pathway is pyrimidine metabolism; CTP biosynthesis via de novo pathway; CTP from UDP: step 2/2. Its activity is regulated as follows. Allosterically activated by GTP, when glutamine is the substrate; GTP has no effect on the reaction when ammonia is the substrate. The allosteric effector GTP functions by stabilizing the protein conformation that binds the tetrahedral intermediate(s) formed during glutamine hydrolysis. Inhibited by the product CTP, via allosteric rather than competitive inhibition. In terms of biological role, catalyzes the ATP-dependent amination of UTP to CTP with either L-glutamine or ammonia as the source of nitrogen. Regulates intracellular CTP levels through interactions with the four ribonucleotide triphosphates. The chain is CTP synthase from Acaryochloris marina (strain MBIC 11017).